Reading from the N-terminus, the 539-residue chain is Chaperonin GroEL (539 aa).

Residues 29 to 32 (TLGP), 86 to 90 (DGTTT), G413, and D494 each bind ATP.

It belongs to the chaperonin (HSP60) family. In terms of assembly, forms a cylinder of 14 subunits composed of two heptameric rings stacked back-to-back. Interacts with the co-chaperonin GroES.

It is found in the cytoplasm. The enzyme catalyses ATP + H2O + a folded polypeptide = ADP + phosphate + an unfolded polypeptide.. In terms of biological role, together with its co-chaperonin GroES, plays an essential role in assisting protein folding. The GroEL-GroES system forms a nano-cage that allows encapsulation of the non-native substrate proteins and provides a physical environment optimized to promote and accelerate protein folding. This chain is Chaperonin GroEL, found in Finegoldia magna (strain ATCC 29328 / DSM 20472 / WAL 2508) (Peptostreptococcus magnus).